We begin with the raw amino-acid sequence, 640 residues long: MWFLNSVNLLFLVCSVALHLDAVNAWSPTNGYAPGVVDCDENINLVRKADAVSDDEADWLKVRHESTVPALKDFLQRGFKGFTNDTSIIDKLLATQDTAPKVAIACSGGGYRAMLSGAGMISAMDNRTDGANDHGLGGLLQSSTYLAGLSGGNWLVGTLAYNNWTSVQAIINNMTDDNSIWDISNSIVNPGGINIFSSISRWDDISDAVEEKKKAGFNTSITDVWGRALSYNFFPSLDEGGVGYTWNTLRDVDVFKNGEMPFPISVAVGRYPGTQVVNLNATVFEFNPFEMGSWDYTLHTFTDVRYAGTNVTNGTPNVTGKCVAGFDNTGFVMGTSSSLFNQFLLQLNTTDLPSFLYNLLHGFLTDASDDYDDISIWAPNPFYEITNIPSNYSQSISEDDTLYLVDGGEDGQNIPLTPLLQTEREIDVIFALDNSADTDQSWPDGFSLTQTYARQFGLQGKGIAFPYVPDVNTFTNLGLNTRPTFFGCDARNLTDLESIPPLVVYMPNTRESFNSNTSTFKMSYSTSERFKMIQNGFEAVTMKNLTKDENFMGCISCAILRRKQESLNYTLPSECDACFEKYCWNGTVDATTPISSTTSSSASSTSTSDSGNKENSARILAPRSTLSLLIGGLASVFISF.

An N-terminal signal peptide occupies residues 1–25; the sequence is MWFLNSVNLLFLVCSVALHLDAVNA. In terms of domain architecture, PLA2c spans 38–589; the sequence is DCDENINLVR…EKYCWNGTVD (552 aa). N-linked (GlcNAc...) asparagine glycosylation is found at Asn-84, Asn-126, Asn-163, Asn-173, Asn-218, Asn-280, Asn-310, Asn-317, Asn-348, Asn-391, Asn-492, Asn-516, Asn-544, Asn-568, and Asn-585. Low complexity predominate over residues 594–610; that stretch reads ISSTTSSSASSTSTSDS. The interval 594–616 is disordered; the sequence is ISSTTSSSASSTSTSDSGNKENS.

Belongs to the lysophospholipase family. Highly glycosylated.

It localises to the secreted. The enzyme catalyses a 1-acyl-sn-glycero-3-phosphocholine + H2O = sn-glycerol 3-phosphocholine + a fatty acid + H(+). Its function is as follows. Catalyzes the release of fatty acids from lysophospholipids. At acidic pH the enzyme hydrolyzes all phospholipid substrates without metal ion. On the other hand, at alkaline pH the enzyme shows substrate specificity for phosphatidylcholine and lysophosphatidylcholine and requires Ca(2+), Fe(3+), or Al(3+) for the activity. The protein is Lysophospholipase (PLB) of Kluyveromyces lactis (strain ATCC 8585 / CBS 2359 / DSM 70799 / NBRC 1267 / NRRL Y-1140 / WM37) (Yeast).